A 547-amino-acid polypeptide reads, in one-letter code: CAP-Gly domain-containing linker protein 3 (547 aa).

A disordered region spans residues 1–49; the sequence is MTKTDPAPMAPPPRGEEEEEEEEDEPVPEAPSPTQERRQKPVVHPSAPA. Over residues 16-27 the composition is skewed to acidic residues; sequence EEEEEEEEDEPV. 3 ANK repeats span residues 117-158, 160-191, and 197-229; these read TDMT…LRSR, TNMN…VVNS, and NHGS…LRNR. One can recognise a CAP-Gly 1 domain in the interval 314 to 356; that stretch reads GTTEFASGQWVGVELDEPEGKNDGSVGGVRYFICPPKQGLFAS. Residues 365–413 form a disordered region; sequence DAPPSSVTSTPRTPRMDFSRVTGKGRREHKGKKKTPSSPSLGSLQQRDG. The span at 367-377 shows a compositional bias: low complexity; that stretch reads PPSSVTSTPRT. Threonine 374 is modified (phosphothreonine). Over residues 387–399 the composition is skewed to basic residues; it reads GKGRREHKGKKKT. Residues 400 to 410 show a composition bias toward polar residues; it reads PSSPSLGSLQQ. At serine 401 the chain carries Phosphoserine. The 43-residue stretch at 436 to 478 folds into the CAP-Gly 2 domain; the sequence is GKTDFAPGYWYGIELDQPTGKHDGSVFGVRYFTCPPRHGVFAP. The goLD stretch occupies residues 488-547; it reads STDSPGDSVGAKKVHQVTMTQPKRTFTTVRTPKDIASENSISRLLFCCWFPWMLRAEMQS. 2 S-palmitoyl cysteine lipidation sites follow: cysteine 534 and cysteine 535.

Homodimer. Interacts with AKT1 and AKT2; when AKT1 and AKT2 are phosphorylated and activated, affinity is higher for AKT2. Interacts with ZDHHC13 (via ANK repeats). Interacts with ZDHHC17 (via ANK repeats). In terms of processing, palmitoylation by ZDHHC17 regulates association with the plasma membrane.

The protein localises to the cell membrane. The protein resides in the cytoplasm. Its subcellular location is the golgi apparatus. It is found in the golgi stack. In terms of biological role, functions as a cytoplasmic linker protein. Involved in TGN-endosome dynamics. May modulate the cellular compartmentalization of AKT kinase family and promote its cell membrane localization, thereby playing a role in glucose transport in adipocytes. The polypeptide is CAP-Gly domain-containing linker protein 3 (CLIP3) (Homo sapiens (Human)).